The sequence spans 210 residues: Na(+)-translocating NADH-quinone reductase subunit D (210 aa).

A run of 6 helical transmembrane segments spans residues 9–29 (SVLI…LGVC), 42–62 (LVMT…ISLI), 72–92 (IIVQ…VLQA), 103–123 (VFVG…AFAM), 131–151 (FMDG…VGFV), and 178–198 (NGLL…IWII).

It belongs to the NqrDE/RnfAE family. Composed of six subunits; NqrA, NqrB, NqrC, NqrD, NqrE and NqrF.

It is found in the cell inner membrane. It catalyses the reaction a ubiquinone + n Na(+)(in) + NADH + H(+) = a ubiquinol + n Na(+)(out) + NAD(+). Functionally, NQR complex catalyzes the reduction of ubiquinone-1 to ubiquinol by two successive reactions, coupled with the transport of Na(+) ions from the cytoplasm to the periplasm. NqrA to NqrE are probably involved in the second step, the conversion of ubisemiquinone to ubiquinol. The protein is Na(+)-translocating NADH-quinone reductase subunit D of Shewanella piezotolerans (strain WP3 / JCM 13877).